The following is an 822-amino-acid chain: uncharacterized protein (822 aa).

Residues 1-230 (MARGKRSTQR…NAAPLNKTDA (230 aa)) form a disordered region. Serine 27 is modified (phosphoserine). Over residues 34 to 44 (SKAKKNKKKLN) the composition is skewed to basic residues. A phosphoserine mark is found at serine 47, serine 51, and serine 55. Position 57 is a phosphotyrosine (tyrosine 57). The span at 61-70 (PEDDEVDEEV) shows a compositional bias: acidic residues. A compositionally biased stretch (basic residues) spans 73 to 85 (VKKKPSKKSKKAK). Residues 92 to 106 (FADEQSVEEEEEEDS) show a composition bias toward acidic residues. Phosphoserine is present on serine 97. Residues 111–121 (RKNKKSSKKAS) are compositionally biased toward basic residues. Composition is skewed to acidic residues over residues 129-144 (LADD…EESE) and 163-172 (SEALDDGDIE). Phosphoserine occurs at positions 137 and 163. ABC transporter domains follow at residues 276–519 (LQVE…VQLA) and 594–809 (IKFQ…AKER). ATP-binding positions include 308–315 (APNGSGKS) and 627–634 (GPNGAGKT).

It belongs to the ABC transporter superfamily.

The protein localises to the cytoplasm. This is an uncharacterized protein from Schizosaccharomyces pombe (strain 972 / ATCC 24843) (Fission yeast).